The following is a 425-amino-acid chain: UDP-N-acetylglucosamine 1-carboxyvinyltransferase (425 aa).

Residue 31–32 participates in phosphoenolpyruvate binding; sequence KN. Arg-100 is a UDP-N-acetyl-alpha-D-glucosamine binding site. The active-site Proton donor is Cys-124. Cys-124 carries the post-translational modification 2-(S-cysteinyl)pyruvic acid O-phosphothioketal. UDP-N-acetyl-alpha-D-glucosamine-binding positions include 129–133, 170–172, Asp-311, and Ile-333; these read RPIDQ and TVT.

It belongs to the EPSP synthase family. MurA subfamily.

It is found in the cytoplasm. The catalysed reaction is phosphoenolpyruvate + UDP-N-acetyl-alpha-D-glucosamine = UDP-N-acetyl-3-O-(1-carboxyvinyl)-alpha-D-glucosamine + phosphate. It participates in cell wall biogenesis; peptidoglycan biosynthesis. Functionally, cell wall formation. Adds enolpyruvyl to UDP-N-acetylglucosamine. This Aquifex aeolicus (strain VF5) protein is UDP-N-acetylglucosamine 1-carboxyvinyltransferase.